Reading from the N-terminus, the 391-residue chain is Inner membrane protein YdcO (391 aa).

Over 1 to 9 (MRLFSIPPP) the chain is Cytoplasmic. The chain crosses the membrane as a helical span at residues 10 to 30 (TLLAGFLAVLIGYASSAAIIW). Topologically, residues 31–42 (QAAIVAGATTAQ) are periplasmic. A helical membrane pass occupies residues 43-63 (ISGWMTALGLAMGVSTLTLTL). Over 64–93 (WYRVPVLTAWSTPGAALLVTGLQGLTLNEA) the chain is Cytoplasmic. A helical membrane pass occupies residues 94–114 (IGVFIVTNALIVLCGITGLFA). At 115-123 (RLMRIIPHS) the chain is on the periplasmic side. Residues 124 to 144 (LAAAMLAGILLRFGLQAFASL) traverse the membrane as a helical segment. The Cytoplasmic portion of the chain corresponds to 145–167 (DGQFTLCGSMLLVWLATKAVAPR). A helical transmembrane segment spans residues 168–188 (YAVIAAMIIGIVIVIAQGDVV). At 189 to 200 (TTDVVFKPVLPT) the chain is on the periplasmic side. The chain crosses the membrane as a helical span at residues 201-221 (YITPDFSFAHSLSVALPLFLV). The Cytoplasmic portion of the chain corresponds to 222 to 246 (TMASQNAPGIAAMKAAGYSAPVSPL). A helical transmembrane segment spans residues 247–267 (IVFTGLLALVFSPFGVYSVGI). The Periplasmic segment spans residues 268-287 (AAITAAICQSPEAHPDKDQR). Residues 288–308 (WLAAAVAGIFYLLAGLFGSAI) form a helical membrane-spanning segment. At 309-311 (TGM) the chain is on the cytoplasmic side. Residues 312 to 332 (MAALPVSWIQMLAGLALLSTI) form a helical membrane-spanning segment. At 333–361 (GGSLYQALHNERERDAAVVAFLVTASGLT) the chain is on the periplasmic side. Residues 362 to 382 (LVGIGSAFWGLIAGGVCYVVL) traverse the membrane as a helical segment. The Cytoplasmic portion of the chain corresponds to 383-391 (NLIADRNRY).

The protein localises to the cell inner membrane. The chain is Inner membrane protein YdcO (ydcO) from Escherichia coli (strain K12).